The primary structure comprises 384 residues: Urotensin-2 receptor (384 aa).

Topologically, residues 1-54 (MALSPEPSSRFLVPATMGSAMPELPGAPNASLNSSLASPTEPNSLEDLVATGTI) are extracellular. Residues Asn29 and Asn33 are each glycosylated (N-linked (GlcNAc...) asparagine). A helical membrane pass occupies residues 55–77 (GVVLSAMGVVGMAGNVYTLTVMC). Topologically, residues 78–87 (RFLHTSASMY) are cytoplasmic. Residues 88–113 (VYVINLALADLLYLLSIPFIVATYVT) traverse the membrane as a helical segment. At 114-124 (KRWHFGDVGCR) the chain is on the extracellular side. A disulfide bond links Cys123 and Cys199. Residues 125-146 (VLFSLDFLTMHASIFTLTLMSR) traverse the membrane as a helical segment. At 147–167 (ERYAAVVRPLDTVQRSKGYRK) the chain is on the cytoplasmic side. A helical transmembrane segment spans residues 168–186 (VLALGTWLLALLLALPMML). Over 187–209 (AIRLVRRGHKSLCLPAWGQRTHR) the chain is Extracellular. Residues 210–232 (AYLTLLFGTSIVGPGVVIGLLYV) form a helical membrane-spanning segment. The Cytoplasmic portion of the chain corresponds to 233–259 (RLARAYWLSQRSSFTQTRRLPNPRVLY). Residues 260–285 (LILGIVLLFWACFLPFWLWQLLAQYR) traverse the membrane as a helical segment. Residues 286–299 (GAPPLAPRSARIVN) lie on the Extracellular side of the membrane. The helical transmembrane segment at 300–320 (YLTTCLTYGNSCVNPFLYTLL) threads the bilayer. Over 321 to 384 (TKNYRDYRQR…SQAVPGSLCV (64 aa)) the chain is Cytoplasmic.

The protein belongs to the G-protein coupled receptor 1 family. In terms of tissue distribution, expressed in neural tissue, including sensory epithelia.

The protein localises to the cell membrane. Its function is as follows. High affinity receptor for urotensin-2 and urotensin-2B. The activity of this receptor is mediated by a G-protein that activate a phosphatidylinositol-calcium second messenger system. This chain is Urotensin-2 receptor (UTS2R), found in Bos taurus (Bovine).